Reading from the N-terminus, the 493-residue chain is UDP-N-acetylmuramate--L-alanine ligase (493 aa).

126-132 (GTHGKTT) is a binding site for ATP.

Belongs to the MurCDEF family.

It localises to the cytoplasm. It carries out the reaction UDP-N-acetyl-alpha-D-muramate + L-alanine + ATP = UDP-N-acetyl-alpha-D-muramoyl-L-alanine + ADP + phosphate + H(+). It participates in cell wall biogenesis; peptidoglycan biosynthesis. Its function is as follows. Cell wall formation. This chain is UDP-N-acetylmuramate--L-alanine ligase, found in Hamiltonella defensa subsp. Acyrthosiphon pisum (strain 5AT).